The sequence spans 214 residues: uncharacterized protein (214 aa).

2 helical membrane passes run I19–L39 and L50–G70.

The protein resides in the cell membrane. This is an uncharacterized protein from Methanocaldococcus jannaschii (strain ATCC 43067 / DSM 2661 / JAL-1 / JCM 10045 / NBRC 100440) (Methanococcus jannaschii).